We begin with the raw amino-acid sequence, 210 residues long: DNA-directed RNA polymerases I, II, and III subunit RPABC1 (210 aa).

An N-acetylmethionine modification is found at Met-1. Lys-81 is covalently cross-linked (Glycyl lysine isopeptide (Lys-Gly) (interchain with G-Cter in SUMO2)).

This sequence belongs to the archaeal Rpo5/eukaryotic RPB5 RNA polymerase subunit family. Component of the RNA polymerase I (Pol I), RNA polymerase II (Pol II) and RNA polymerase III (Pol III) complexes consisting of at least 13, 12 and 17 subunits, respectively. Pol I complex consists of a ten-subunit catalytic core composed of POLR1A/RPA1, POLR1B/RPA2, POLR1C/RPAC1, POLR1D/RPAC2, POLR1H/RPA12, POLR2E/RPABC1, POLR2F/RPABC2, POLR2H/RPABC3, POLR2K/RPABC4 and POLR2L/RPABC5; a mobile stalk subunit POLR1F/RPA43 protruding from the core and additional subunits homologous to general transcription factors POLR1E/RPA49 and POLR1G/RPA34. Part of Pol I pre-initiation complex (PIC), in which Pol I core assembles with RRN3 and promoter-bound UTBF and SL1/TIF-IB complex. Pol II complex contains a ten-subunit catalytic core composed of POLR2A/RPB1, POLR2B/RPB2, POLR2C/RPB3, POLR2I/RPB9, POLR2J/RPB11, POLR2E/RPABC1, POLR2F/RPABC2, POLR2H/RPABC3, POLR2K/RPABC4 and POLR2L/RPABC5 and a mobile stalk composed of two subunits POLR2D/RPB4 and POLR2G/RPB7. Part of Pol II(G) complex, in which Pol II core associates with an additional subunit POLR2M; unlike conventional Pol II, Pol II(G) functions as a transcriptional repressor. Part of TBP-based Pol II pre-initiation complex (PIC), in which Pol II core assembles with general transcription factors and other specific initiation factors including GTF2E1, GTF2E2, GTF2F1, GTF2F2, TCEA1, ERCC2, ERCC3, GTF2H2, GTF2H3, GTF2H4, GTF2H5, GTF2A1, GTF2A2, GTF2B and TBP; this large multi-subunit PIC complex mediates DNA unwinding and targets Pol II core to the transcription start site where the first phosphodiester bond forms. In Pol II complex, this subunit is present in 2-fold molar excess over the other subunits. Pol III complex consists of a ten-subunit catalytic core composed of POLR3A/RPC1, POLR3B/RPC2, POLR1C/RPAC1, POLR1D/RPAC2, POLR3K/RPC10, POLR2E/RPABC1, POLR2F/RPABC2, POLR2H/RPABC3, POLR2K/RPABC4 and POLR2L/RPABC5; a mobile stalk composed of two subunits POLR3H/RPC8 and CRCP/RPC9, protruding from the core and functioning primarily in transcription initiation; and additional subunits homologous to general transcription factors of the RNA polymerase II machinery, POLR3C/RPC3-POLR3F/RPC6-POLR3G/RPC7 heterotrimer required for transcription initiation and POLR3D/RPC4-POLR3E/RPC5 heterodimer involved in both transcription initiation and termination. Component of the PAQosome complex which is responsible for the biogenesis of several protein complexes and which consists of R2TP complex members RUVBL1, RUVBL2, RPAP3 and PIH1D1, URI complex members PFDN2, PFDN6, PDRG1, UXT and URI1 as well as ASDURF, POLR2E and DNAAF10/WDR92. Interacts with URI1.

The protein localises to the nucleus. It is found in the nucleolus. Functionally, DNA-dependent RNA polymerase catalyzes the transcription of DNA into RNA using the four ribonucleoside triphosphates as substrates. Common component of RNA polymerases I, II and III which synthesize ribosomal RNA precursors, mRNA precursors and many functional non-coding RNAs, and small RNAs, such as 5S rRNA and tRNAs, respectively. Pol II is the central component of the basal RNA polymerase II transcription machinery. Pols are composed of mobile elements that move relative to each other. In Pol II, POLR2E/RPABC1 is part of the lower jaw surrounding the central large cleft and thought to grab the incoming DNA template. Seems to be the major component in this process. The polypeptide is DNA-directed RNA polymerases I, II, and III subunit RPABC1 (POLR2E) (Pongo abelii (Sumatran orangutan)).